The following is a 290-amino-acid chain: MNFKAGFMTCNQRKPDWLKIKLPTGELSQEVSNTIKIHKLNTICTSGKCPNQGECWRCGTATFMICGNICTRACKFCNVPTGCPLPLNPNEPMEIAQSVEALKLKHVVLTSVDRDDIKDFGASHWVKVIRAVKQKTPNVTMEVLIPDFQGHEDLVSMIIEAKPEVISHNLETVRRLSPHVRSRATYDTSLKVLKQIADSGLVCKSGIMLGLGETRAEILETMDDLRKINCKVMTIGQYLRPSIKNIEVKEYVRPEVFEEYKQIGLEKGFSFVESGPLVRSSYHAEKHVLS.

[4Fe-4S] cluster-binding residues include cysteine 44, cysteine 49, cysteine 55, cysteine 70, cysteine 74, cysteine 77, and serine 281. Residues tryptophan 56–serine 270 form the Radical SAM core domain.

Belongs to the radical SAM superfamily. Lipoyl synthase family. Requires [4Fe-4S] cluster as cofactor.

Its subcellular location is the cytoplasm. It catalyses the reaction [[Fe-S] cluster scaffold protein carrying a second [4Fe-4S](2+) cluster] + N(6)-octanoyl-L-lysyl-[protein] + 2 oxidized [2Fe-2S]-[ferredoxin] + 2 S-adenosyl-L-methionine + 4 H(+) = [[Fe-S] cluster scaffold protein] + N(6)-[(R)-dihydrolipoyl]-L-lysyl-[protein] + 4 Fe(3+) + 2 hydrogen sulfide + 2 5'-deoxyadenosine + 2 L-methionine + 2 reduced [2Fe-2S]-[ferredoxin]. It participates in protein modification; protein lipoylation via endogenous pathway; protein N(6)-(lipoyl)lysine from octanoyl-[acyl-carrier-protein]: step 2/2. Functionally, catalyzes the radical-mediated insertion of two sulfur atoms into the C-6 and C-8 positions of the octanoyl moiety bound to the lipoyl domains of lipoate-dependent enzymes, thereby converting the octanoylated domains into lipoylated derivatives. The polypeptide is Lipoyl synthase (Treponema denticola (strain ATCC 35405 / DSM 14222 / CIP 103919 / JCM 8153 / KCTC 15104)).